A 357-amino-acid chain; its full sequence is Sulfate/thiosulfate import ATP-binding protein CysA (357 aa).

Residues 3-237 (ITIQNLNKHF…PENAFVTEFL (235 aa)) enclose the ABC transporter domain. An ATP-binding site is contributed by 35-42 (GPSGCGKT).

It belongs to the ABC transporter superfamily. Sulfate/tungstate importer (TC 3.A.1.6) family. As to quaternary structure, the complex is composed of two ATP-binding proteins (CysA), two transmembrane proteins (CysT and CysW) and a solute-binding protein (CysP).

The protein resides in the cell inner membrane. The enzyme catalyses sulfate(out) + ATP + H2O = sulfate(in) + ADP + phosphate + H(+). The catalysed reaction is thiosulfate(out) + ATP + H2O = thiosulfate(in) + ADP + phosphate + H(+). Functionally, part of the ABC transporter complex CysAWTP involved in sulfate/thiosulfate import. Responsible for energy coupling to the transport system. This is Sulfate/thiosulfate import ATP-binding protein CysA from Neisseria meningitidis serogroup A / serotype 4A (strain DSM 15465 / Z2491).